The following is a 199-amino-acid chain: Charged multivesicular body protein 1b (199 aa).

2 coiled-coil regions span residues 10–48 (NLKF…MEVA) and 178–199 (TSVA…RDQV). Residues 167 to 199 (ELPQGQTGSVGTSVASAEQDELSQRLARLRDQV) form a disordered region. Positions 170 to 182 (QGQTGSVGTSVAS) are enriched in polar residues. An MIT-interacting motif motif is present at residues 186-196 (DELSQRLARLR).

It belongs to the SNF7 family. In terms of assembly, probable peripherally associated component of the endosomal sorting required for transport complex III (ESCRT-III).

Its subcellular location is the cytoplasm. The protein resides in the cytosol. It is found in the endosome. The protein localises to the late endosome membrane. Functionally, probable peripherally associated component of the endosomal sorting required for transport complex III (ESCRT-III) which is involved in multivesicular bodies (MVBs) formation and sorting of endosomal cargo proteins into MVBs. MVBs contain intraluminal vesicles (ILVs) that are generated by invagination and scission from the limiting membrane of the endosome and mostly are delivered to lysosomes enabling degradation of membrane proteins, such as stimulated growth factor receptors, lysosomal enzymes and lipids. This chain is Charged multivesicular body protein 1b (CHMP1B), found in Gallus gallus (Chicken).